A 338-amino-acid polypeptide reads, in one-letter code: Beta-ketoacyl-[acyl-carrier-protein] synthase III (338 aa).

Active-site residues include C119 and H261. The ACP-binding stretch occupies residues 262-266 (QANQR). N291 is an active-site residue.

The protein belongs to the thiolase-like superfamily. FabH family. Homodimer.

It localises to the cytoplasm. It catalyses the reaction malonyl-[ACP] + acetyl-CoA + H(+) = 3-oxobutanoyl-[ACP] + CO2 + CoA. The protein operates within lipid metabolism; fatty acid biosynthesis. In terms of biological role, catalyzes the condensation reaction of fatty acid synthesis by the addition to an acyl acceptor of two carbons from malonyl-ACP. Catalyzes the first condensation reaction which initiates fatty acid synthesis and may therefore play a role in governing the total rate of fatty acid production. Possesses both acetoacetyl-ACP synthase and acetyl transacylase activities. Its substrate specificity determines the biosynthesis of branched-chain and/or straight-chain of fatty acids. This Prochlorococcus marinus (strain SARG / CCMP1375 / SS120) protein is Beta-ketoacyl-[acyl-carrier-protein] synthase III.